The sequence spans 608 residues: ESX-3 secretion system protein EccA3 (608 aa).

The segment at 284–303 is disordered; that stretch reads EARSDPWDPETEPSEAEFVD. Acidic residues predominate over residues 290 to 301; it reads WDPETEPSEAEF. 365–372 serves as a coordination point for ATP; that stretch reads GPPGTGKT.

This sequence belongs to the CbxX/CfxQ family. In terms of assembly, part of the ESX-3 / type VII secretion system (T7SS), which is composed of cytosolic and membrane components.

The protein localises to the cytoplasm. In terms of biological role, part of the ESX-3 specialized secretion system, which is required for siderophore-mediated iron acquisition and for the secretion of EsxH and EsxG. EccA3 exhibits ATPase activity and may provide energy for the export of ESX-3 substrates. This is ESX-3 secretion system protein EccA3 from Mycolicibacterium smegmatis (strain ATCC 700084 / mc(2)155) (Mycobacterium smegmatis).